Consider the following 259-residue polypeptide: O-antigen export system permease protein RfbA (259 aa).

The next 6 membrane-spanning stretches (helical) occupy residues 33 to 53 (FGYL…YFIF), 73 to 95 (FPWQ…NAQI), 111 to 131 (VMME…FLFV), 142 to 162 (WGIP…SIIF), 176 to 196 (VSLG…SDMI), and 228 to 248 (EYIS…LAIF). The region spanning 33–251 (FGYLWSIANP…IVGLAIFNKL (219 aa)) is the ABC transmembrane type-2 domain.

Belongs to the ABC-2 integral membrane protein family.

It is found in the cell inner membrane. In terms of biological role, may form an ATP-driven O-antigen export apparatus, in association with RfbB. This is O-antigen export system permease protein RfbA (rfbA) from Klebsiella pneumoniae.